Reading from the N-terminus, the 346-residue chain is Uroporphyrinogen decarboxylase (346 aa).

Substrate is bound by residues 21 to 25 (RQAGR), D71, Y146, S201, and H316.

This sequence belongs to the uroporphyrinogen decarboxylase family. In terms of assembly, homodimer.

It is found in the cytoplasm. It catalyses the reaction uroporphyrinogen III + 4 H(+) = coproporphyrinogen III + 4 CO2. It functions in the pathway porphyrin-containing compound metabolism; protoporphyrin-IX biosynthesis; coproporphyrinogen-III from 5-aminolevulinate: step 4/4. In terms of biological role, catalyzes the decarboxylation of four acetate groups of uroporphyrinogen-III to yield coproporphyrinogen-III. The polypeptide is Uroporphyrinogen decarboxylase (Rickettsia rickettsii (strain Iowa)).